A 111-amino-acid chain; its full sequence is 2Fe-2S ferredoxin (111 aa).

Residues 5-107 (IKVTFVINNG…GIKVRLPSAT (103 aa)) form the 2Fe-2S ferredoxin-type domain. 4 residues coordinate [2Fe-2S] cluster: C42, C48, C51, and C88.

This sequence belongs to the adrenodoxin/putidaredoxin family. [2Fe-2S] cluster serves as cofactor.

Its function is as follows. Ferredoxin are iron-sulfur proteins that transfer electrons in a wide variety of metabolic reactions. In Rickettsia bellii (strain RML369-C), this protein is 2Fe-2S ferredoxin (fdxB).